The sequence spans 475 residues: Fez family zinc finger protein 1 (475 aa).

Positions 28-43 (PLAFSIERIMARTPEP) match the Engrailed homology 1 repressor motif. C2H2-type zinc fingers lie at residues 260-282 (FTCEVCGKVFNAHYNLTRHMPVH), 288-310 (FVCKVCGKGFRQASTLCRHKIIH), 316-338 (HKCNQCGKAFNRSSTLNTHTRIH), 344-366 (FVCEFCGKGFHQKGNYKNHKLTH), 372-394 (FKCNICNKAFHQVYNLTFHMHTH), and 400-423 (FTCPTCGKGFCRNFDLKKHVRKLH). Residues 428–475 (GLARTPAGEPGTEPPPPLPQQPPMTLPPLQPPLPTPGPLQPGLHQGHQ) form a disordered region. Residues 439-466 (TEPPPPLPQQPPMTLPPLQPPLPTPGPL) show a composition bias toward pro residues.

This sequence belongs to the krueppel C2H2-type zinc-finger protein family. Expressed in brain. Little or no expression in other tissues. Overexpressed specifically in gastric cancers. A 2- to 20-fold increase is found in over 50% of gastric cancer tissues.

The protein localises to the nucleus. Transcription repressor. Involved in the axonal projection and proper termination of olfactory sensory neurons (OSN). Plays a role in rostro-caudal patterning of the diencephalon and in prethalamic formation. Expression is required in OSN to cell-autonomously regulate OSN axon projections. Regulates non-cell-autonomously the layer formation of the olfactory bulb development and the interneurons. May be required for correct rostral migration of the interneuron progenitors. The chain is Fez family zinc finger protein 1 (FEZF1) from Homo sapiens (Human).